Reading from the N-terminus, the 70-residue chain is Pyruvate-flavodoxin oxidoreductase (70 aa).

This sequence belongs to the pyruvate:ferredoxin/flavodoxin oxidoreductase family.

The catalysed reaction is oxidized [flavodoxin] + pyruvate + CoA + 2 H(+) = reduced [flavodoxin] + acetyl-CoA + CO2. Oxidoreductase required for the transfer of electrons from pyruvate to flavodoxin, which reduces nitrogenase. This Anabaena variabilis protein is Pyruvate-flavodoxin oxidoreductase (nifJ).